A 1866-amino-acid polypeptide reads, in one-letter code: RNA1 polyprotein (1866 aa).

An SF3 helicase domain is found at 462 to 633; sequence LKGINDLEQL…KAYDAANFAS (172 aa). 494–501 contributes to the ATP binding site; sequence GKSRTGKS. The chain crosses the membrane as a helical span at residues 897–917; it reads LVGSGNGPVLMGVAAGAFSAE. At Ser-920 the chain carries O-(5'-phospho-RNA)-serine. In terms of domain architecture, Peptidase C3 spans 945–1150; the sequence is DAQMSLDQSS…CASLLPPLEP (206 aa). Residues His-987, Glu-1023, and Cys-1113 each act as for picornain 3C-like protease activity in the active site. Positions 1429–1559 constitute a RdRp catalytic domain; the sequence is NDVLCCDYSS…SVNAVVTPYF (131 aa).

In terms of processing, specific enzymatic cleavages by picornain 3C-like protease in vivo yield mature proteins. Picornain 3C-like protease is autocatalytically processed. Post-translationally, uridylylated by the polymerase and is covalently linked to the 5'-end of genomic RNA. This uridylylated form acts as a nucleotide-peptide primer for the polymerase.

It is found in the host membrane. The protein resides in the host cytoplasm. The protein localises to the host perinuclear region. Its subcellular location is the host endoplasmic reticulum. It catalyses the reaction RNA(n) + a ribonucleoside 5'-triphosphate = RNA(n+1) + diphosphate. Functionally, thiol protease that cleaves the RNA1 and RNA2 polyproteins. Plays a role in RNA replication. It is covalently linked to the 5'terminus of both viral single-stranded RNA1 and RNA2 molecules. In terms of biological role, down-regulates the RNA1 polyprotein processing and enhances trans-cleavage of RNA2 polyproteins. The protease cofactor and the putative helicase seem to target the replication complexes to ER membranes. Their physical association causes the membrane rearrangement of host ER that may result in formation of the small membranous vesicles that are the site of viral RNA synthesis. Its function is as follows. The protease cofactor and the putative helicase seem to target the replication complexes to ER membranes. Their physical association causes the membrane rearrangement of host ER that may result in formation of the small membranous vesicles that are the site of viral RNA synthesis. Functionally, replicates the viral genome. The chain is RNA1 polyprotein from Cajanus cajan (Pigeon pea).